Reading from the N-terminus, the 880-residue chain is Endoglucanase E-4 (880 aa).

Residues 1–46 (MSVTEPPPRRRGRHSRARRFLTSLGATAALTAGMLGVPLATGTAHA) form the signal peptide. Asp104 functions as the Nucleophile in the catalytic mechanism. Residues His422, His427, Asp461, and Glu470 contribute to the active site. One can recognise a CBM3 domain in the interval 504–652 (PDGPEIFVEA…GVPVWGTAPE (149 aa)). A disordered region spans residues 647-688 (WGTAPEEGEEPGGGEGPGGGEEPGEDVTPPSAPGSPAVRDVT). The Fibronectin type-III domain maps to 678-770 (APGSPAVRDV…TVSFTTLAEN (93 aa)). One can recognise a CBM2 domain in the interval 771–880 (GGGPDASCTV…TLNGEPCALA (110 aa)).

The protein belongs to the glycosyl hydrolase 9 (cellulase E) family.

The catalysed reaction is Endohydrolysis of (1-&gt;4)-beta-D-glucosidic linkages in cellulose, lichenin and cereal beta-D-glucans.. It functions in the pathway glycan metabolism; cellulose degradation. The polypeptide is Endoglucanase E-4 (celD) (Thermobifida fusca (Thermomonospora fusca)).